The chain runs to 755 residues: Serine/threonine-protein kinase GA29083 (755 aa).

Positions 18-52 (QASASGSGTPKKTAASSAAAQNSKQLLDQLSQQQK) are enriched in low complexity. The tract at residues 18 to 128 (QASASGSGTP…GSANTNGSAS (111 aa)) is disordered. 2 stretches are compositionally biased toward basic and acidic residues: residues 53–66 (AQEE…RDCD) and 74–84 (EPEKDLDELRD). Residues 87–99 (GSLTGSGSVGKSN) are compositionally biased toward polar residues. Residues 100–128 (GSLSGASSTTSAPAGTSTPGSANTNGSAS) are compositionally biased toward low complexity. 2 consecutive Doublecortin domains span residues 157-243 (HRIK…VDYN) and 314-397 (RIVT…VEDF). The 259-residue stretch at 484–742 (YTLSQIIGDG…SEDILDHYWT (259 aa)) folds into the Protein kinase domain. ATP is bound by residues 490–498 (IGDGNFAIV) and Lys513. The Proton acceptor role is filled by Asp605.

The protein belongs to the protein kinase superfamily. CAMK Ser/Thr protein kinase family. CaMK subfamily.

The enzyme catalyses L-seryl-[protein] + ATP = O-phospho-L-seryl-[protein] + ADP + H(+). It catalyses the reaction L-threonyl-[protein] + ATP = O-phospho-L-threonyl-[protein] + ADP + H(+). This Drosophila pseudoobscura pseudoobscura (Fruit fly) protein is Serine/threonine-protein kinase GA29083.